A 147-amino-acid polypeptide reads, in one-letter code: Globin, polymeric component P3 (147 aa).

The region spanning 2–146 is the Globin domain; the sequence is HLTADQVAAL…ISDALIAGLE (145 aa). Histidine 96 contributes to the heme b binding site.

It belongs to the globin family. As to quaternary structure, polymer.

This is Globin, polymeric component P3 from Glycera dibranchiata (Bloodworm).